The sequence spans 62 residues: UPF0434 protein Arad_4458 (62 aa).

This sequence belongs to the UPF0434 family.

The chain is UPF0434 protein Arad_4458 from Rhizobium rhizogenes (strain K84 / ATCC BAA-868) (Agrobacterium radiobacter).